Here is a 333-residue protein sequence, read N- to C-terminus: tRNA N6-adenosine threonylcarbamoyltransferase (333 aa).

Positions 111 and 115 each coordinate Fe cation. Residues 134 to 138 (VVSGG), D167, G180, D184, and N273 contribute to the substrate site. A Fe cation-binding site is contributed by D302.

This sequence belongs to the KAE1 / TsaD family. Fe(2+) serves as cofactor.

The protein resides in the cytoplasm. The enzyme catalyses L-threonylcarbamoyladenylate + adenosine(37) in tRNA = N(6)-L-threonylcarbamoyladenosine(37) in tRNA + AMP + H(+). Functionally, required for the formation of a threonylcarbamoyl group on adenosine at position 37 (t(6)A37) in tRNAs that read codons beginning with adenine. Is involved in the transfer of the threonylcarbamoyl moiety of threonylcarbamoyl-AMP (TC-AMP) to the N6 group of A37, together with TsaE and TsaB. TsaD likely plays a direct catalytic role in this reaction. This chain is tRNA N6-adenosine threonylcarbamoyltransferase, found in Anaeromyxobacter sp. (strain Fw109-5).